The primary structure comprises 285 residues: Pyrroline-5-carboxylate reductase (285 aa).

Belongs to the pyrroline-5-carboxylate reductase family. Homotetramer.

The catalysed reaction is L-proline + NADP(+) = (S)-1-pyrroline-5-carboxylate + NADPH + 2 H(+). The enzyme catalyses L-proline + NAD(+) = (S)-1-pyrroline-5-carboxylate + NADH + 2 H(+). It functions in the pathway amino-acid biosynthesis; L-proline biosynthesis; L-proline from L-glutamate 5-semialdehyde: step 1/1. This Kluyveromyces lactis (strain ATCC 8585 / CBS 2359 / DSM 70799 / NBRC 1267 / NRRL Y-1140 / WM37) (Yeast) protein is Pyrroline-5-carboxylate reductase.